The sequence spans 379 residues: Probable pectin lyase A (379 aa).

The N-terminal stretch at 1–19 (MKFALLSGVAAGLLPVVSA) is a signal peptide. Disulfide bonds link Cys-82–Cys-101 and Cys-91–Cys-225. The active site involves Arg-255. A disulfide bond links Cys-322 and Cys-330.

It belongs to the polysaccharide lyase 1 family.

It is found in the secreted. It carries out the reaction Eliminative cleavage of (1-&gt;4)-alpha-D-galacturonan methyl ester to give oligosaccharides with 4-deoxy-6-O-methyl-alpha-D-galact-4-enuronosyl groups at their non-reducing ends.. Pectinolytic enzymes consist of four classes of enzymes: pectin lyase, polygalacturonase, pectin methylesterase and rhamnogalacturonase. Among pectinolytic enzymes, pectin lyase is the most important in depolymerization of pectin, since it cleaves internal glycosidic bonds of highly methylated pectins. The protein is Probable pectin lyase A (pelA) of Aspergillus oryzae (strain ATCC 42149 / RIB 40) (Yellow koji mold).